The chain runs to 132 residues: NADPH-dependent 7-cyano-7-deazaguanine reductase (132 aa).

Cys48 serves as the catalytic Thioimide intermediate. Residue Asp55 is the Proton donor of the active site. Substrate is bound by residues 70–72 (LEL) and 89–90 (ME).

Belongs to the GTP cyclohydrolase I family. QueF type 1 subfamily.

The protein resides in the cytoplasm. It carries out the reaction 7-aminomethyl-7-carbaguanine + 2 NADP(+) = 7-cyano-7-deazaguanine + 2 NADPH + 3 H(+). The protein operates within tRNA modification; tRNA-queuosine biosynthesis. Functionally, catalyzes the NADPH-dependent reduction of 7-cyano-7-deazaguanine (preQ0) to 7-aminomethyl-7-deazaguanine (preQ1). In Elusimicrobium minutum (strain Pei191), this protein is NADPH-dependent 7-cyano-7-deazaguanine reductase.